The chain runs to 582 residues: Inactive metallocarboxypeptidase ECM14 (582 aa).

An N-terminal signal peptide occupies residues 1 to 20; sequence MHILQVITGATLVSVPFVSA. Positions 21–172 are excised as a propeptide; the sequence is IPSSTSEFLP…QAVYESYPQP (152 aa). One can recognise a Peptidase M14 domain in the interval 200–522; that stretch reads DYQPLSVIIP…NAVLVFGQFL (323 aa). Zn(2+) contacts are provided by His-265 and Glu-268. Residues 265-268, Arg-323, and 340-341 each bind substrate; these read HARE and DR. An intrachain disulfide couples Cys-334 to Cys-357. Residues Asn-381 and Asn-387 are each glycosylated (N-linked (GlcNAc...) asparagine). A Zn(2+)-binding site is contributed by His-397. 398 to 399 contributes to the substrate binding site; sequence SY. Residues 561 to 571 show a composition bias toward acidic residues; sequence SNQLEDDDNEN. The interval 561 to 582 is disordered; it reads SNQLEDDDNENDTLLGFRTQKV. The N-linked (GlcNAc...) asparagine glycan is linked to Asn-571.

The protein belongs to the peptidase M14 family. Zn(2+) serves as cofactor.

It is found in the vacuole. It localises to the secreted. Inactive carboxypeptidase that may play a role in cell wall organization and biogenesis. The protein is Inactive metallocarboxypeptidase ECM14 (ECM14) of Coccidioides posadasii (strain C735) (Valley fever fungus).